The primary structure comprises 248 residues: Phosphoadenosine 5'-phosphosulfate reductase (248 aa).

Cys-239 serves as the catalytic Nucleophile; cysteine thiosulfonate intermediate.

Belongs to the PAPS reductase family. CysH subfamily.

It is found in the cytoplasm. The catalysed reaction is [thioredoxin]-disulfide + sulfite + adenosine 3',5'-bisphosphate + 2 H(+) = [thioredoxin]-dithiol + 3'-phosphoadenylyl sulfate. Its pathway is sulfur metabolism; hydrogen sulfide biosynthesis; sulfite from sulfate: step 3/3. Catalyzes the formation of sulfite from phosphoadenosine 5'-phosphosulfate (PAPS) using thioredoxin as an electron donor. This chain is Phosphoadenosine 5'-phosphosulfate reductase, found in Alteromonas mediterranea (strain DSM 17117 / CIP 110805 / LMG 28347 / Deep ecotype).